Consider the following 329-residue polypeptide: Phosphate import ATP-binding protein PstB (329 aa).

The ABC transporter domain maps to 83–325 (FEIRNFNFWY…PKQKATNSYI (243 aa)). ATP is bound at residue 116 to 123 (GKSGCGKS).

The protein belongs to the ABC transporter superfamily. Phosphate importer (TC 3.A.1.7) family. The complex is composed of two ATP-binding proteins (PstB), two transmembrane proteins (PstC and PstA) and a solute-binding protein (PstS).

Its subcellular location is the cell membrane. It catalyses the reaction phosphate(out) + ATP + H2O = ADP + 2 phosphate(in) + H(+). Part of the ABC transporter complex PstSACB involved in phosphate import. Responsible for energy coupling to the transport system. This is Phosphate import ATP-binding protein PstB from Mycoplasma genitalium (strain ATCC 33530 / DSM 19775 / NCTC 10195 / G37) (Mycoplasmoides genitalium).